The chain runs to 1430 residues: Gag-Pol polyprotein (1430 aa).

Residue Gly2 is the site of N-myristoyl glycine; by host attachment. Residues 7 to 31 (VLSGGKLDAWEKIRLKPGGKKRYRL) are interaction with Gp41. Residues 8–43 (LSGGKLDAWEKIRLKPGGKKRYRLKHLVWASRELER) are interaction with host CALM1. The interval 12-19 (KLDAWEKI) is interaction with host AP3D1. The tract at residues 14-33 (DAWEKIRLKPGGKKRYRLKH) is interaction with membrane phosphatidylinositol 4,5-bisphosphate and RNA. Positions 16–22 (WEKIRLK) match the Nuclear export signal motif. Residues 26–32 (KKRYRLK) carry the Nuclear localization signal motif. The segment at 73–77 (EELKS) is interaction with membrane phosphatidylinositol 4,5-bisphosphate. Positions 105-124 (QEEQDKSQQKEQQKAADKEV) are disordered. Residue Tyr128 is modified to Phosphotyrosine; by host. Positions 185-223 (NTVGGHQAAMQMLKDTINEEAAEWDRLHPVHAGPIPPGQ) are interaction with human PPIA/CYPA and NUP153. The tract at residues 273–359 (YSPVSILDIK…GGPGHKARIL (87 aa)) is dimerization/Multimerization of capsid protein p24. 2 consecutive CCHC-type zinc fingers follow at residues 385–402 (VKCF…NCRA) and 406–423 (KGCW…DCTE). Positions 440 to 479 (ARKFSSEQTRANSPASRELRVRRGDNPLPEAGAERRGTGS) are disordered. Residues 445–454 (SEQTRANSPA) show a composition bias toward polar residues. The segment at 484–488 (PQITL) is dimerization of protease. The 70-residue stretch at 503 to 572 (REALLDTGAD…TPVNIIGRNL (70 aa)) folds into the Peptidase A2 domain. The active-site For protease activity; shared with dimeric partner is Asp508. 2 dimerization of protease regions span residues 532-538 (GIGGFIK) and 571-583 (NLLT…LNFP). Residues 626–816 (EGKISKIGPE…PPFLWMGYEL (191 aa)) form the Reverse transcriptase domain. 3 residues coordinate Mg(2+): Asp692, Asp767, and Asp768. Positions 809–817 (FLWMGYELH) are RT 'primer grip'. The Tryptophan repeat motif motif lies at 980-996 (WEIWWTEYWQATWIPEW). One can recognise an RNase H type-1 domain in the interval 1016–1139 (IAGAETFYVD…VDKLVSSGIR (124 aa)). The Mg(2+) site is built by Asp1025, Glu1060, Asp1080, and Asp1131. The segment at 1145 to 1186 (DGIDKAQEEHEKYHNNWRAMASDFNLPPVVAKEIVANCDKCQ) adopts an Integrase-type zinc-finger fold. 4 residues coordinate Zn(2+): His1154, His1158, Cys1182, and Cys1185. An Integrase catalytic domain is found at 1196–1346 (VDCSPGIWQL…SAGERIIDII (151 aa)). Asp1206, Asp1258, and Glu1294 together coordinate Mg(2+). Positions 1365 to 1412 (FRVYFRDSRDPVWKGPAKLLWKGEGAVVIQDNNEIKVVPRRKAKIIRD) form a DNA-binding region, integrase-type.

As to quaternary structure, homotrimer; further assembles as hexamers of trimers. Interacts with gp41 (via C-terminus). Interacts with host CALM1; this interaction induces a conformational change in the Matrix protein, triggering exposure of the myristate group. Interacts with host AP3D1; this interaction allows the polyprotein trafficking to multivesicular bodies during virus assembly. Part of the pre-integration complex (PIC) which is composed of viral genome, matrix protein, Vpr and integrase. Homodimer; the homodimer further multimerizes as homohexamers or homopentamers. Interacts with human PPIA/CYPA; This interaction stabilizes the capsid. Interacts with human NUP153. Interacts with host PDZD8; this interaction stabilizes the capsid. Interacts with monkey TRIM5; this interaction destabilizes the capsid. In terms of assembly, homodimer, whose active site consists of two apposed aspartic acid residues. As to quaternary structure, heterodimer of p66 RT and p51 RT (RT p66/p51). Heterodimerization of RT is essential for DNA polymerase activity. The overall folding of the subdomains is similar in p66 RT and p51 RT but the spatial arrangements of the subdomains are dramatically different. Homotetramer; may further associate as a homohexadecamer. Part of the pre-integration complex (PIC) which is composed of viral genome, matrix protein, Vpr and integrase. Interacts with human SMARCB1/INI1 and human PSIP1/LEDGF isoform 1. Interacts with human KPNA3; this interaction might play a role in nuclear import of the pre-integration complex. Interacts with human NUP153; this interaction might play a role in nuclear import of the pre-integration complex. Mg(2+) serves as cofactor. Post-translationally, specific enzymatic cleavages by the viral protease yield mature proteins. The protease is released by autocatalytic cleavage. The polyprotein is cleaved during and after budding, this process is termed maturation. Proteolytic cleavage of p66 RT removes the RNase H domain to yield the p51 RT subunit. Nucleocapsid protein p7 might be further cleaved after virus entry. Tyrosine phosphorylated presumably in the virion by a host kinase. Phosphorylation is apparently not a major regulator of membrane association. In terms of processing, phosphorylated possibly by host MAPK1; this phosphorylation is necessary for Pin1-mediated virion uncoating. Post-translationally, methylated by host PRMT6, impairing its function by reducing RNA annealing and the initiation of reverse transcription.

Its subcellular location is the host cell membrane. The protein resides in the host endosome. It is found in the host multivesicular body. The protein localises to the virion membrane. It localises to the host nucleus. Its subcellular location is the host cytoplasm. The protein resides in the virion. It carries out the reaction Specific for a P1 residue that is hydrophobic, and P1' variable, but often Pro.. The catalysed reaction is Endohydrolysis of RNA in RNA/DNA hybrids. Three different cleavage modes: 1. sequence-specific internal cleavage of RNA. Human immunodeficiency virus type 1 and Moloney murine leukemia virus enzymes prefer to cleave the RNA strand one nucleotide away from the RNA-DNA junction. 2. RNA 5'-end directed cleavage 13-19 nucleotides from the RNA end. 3. DNA 3'-end directed cleavage 15-20 nucleotides away from the primer terminus.. The enzyme catalyses 3'-end directed exonucleolytic cleavage of viral RNA-DNA hybrid.. It catalyses the reaction DNA(n) + a 2'-deoxyribonucleoside 5'-triphosphate = DNA(n+1) + diphosphate. Protease: The viral protease is inhibited by many synthetic protease inhibitors (PIs), such as amprenavir, atazanavir, indinavir, loprinavir, nelfinavir, ritonavir and saquinavir. Use of protease inhibitors in tritherapy regimens permit more ambitious therapeutic strategies. Reverse transcriptase/ribonuclease H: RT can be inhibited either by nucleoside RT inhibitors (NRTIs) or by non nucleoside RT inhibitors (NNRTIs). NRTIs act as chain terminators, whereas NNRTIs inhibit DNA polymerization by binding a small hydrophobic pocket near the RT active site and inducing an allosteric change in this region. Classical NRTIs are abacavir, adefovir (PMEA), didanosine (ddI), lamivudine (3TC), stavudine (d4T), tenofovir (PMPA), zalcitabine (ddC), and zidovudine (AZT). Classical NNRTIs are atevirdine (BHAP U-87201E), delavirdine, efavirenz (DMP-266), emivirine (I-EBU), and nevirapine (BI-RG-587). The tritherapies used as a basic effective treatment of AIDS associate two NRTIs and one NNRTI. Its function is as follows. Mediates, with Gag polyprotein, the essential events in virion assembly, including binding the plasma membrane, making the protein-protein interactions necessary to create spherical particles, recruiting the viral Env proteins, and packaging the genomic RNA via direct interactions with the RNA packaging sequence (Psi). Gag-Pol polyprotein may regulate its own translation, by the binding genomic RNA in the 5'-UTR. At low concentration, the polyprotein would promote translation, whereas at high concentration, the polyprotein would encapsidate genomic RNA and then shut off translation. In terms of biological role, targets the polyprotein to the plasma membrane via a multipartite membrane-binding signal, that includes its myristoylated N-terminus. Matrix protein is part of the pre-integration complex. Implicated in the release from host cell mediated by Vpu. Binds to RNA. Forms the conical core that encapsulates the genomic RNA-nucleocapsid complex in the virion. Most core are conical, with only 7% tubular. The core is constituted by capsid protein hexamer subunits. The core is disassembled soon after virion entry. Host restriction factors such as TRIM5-alpha or TRIMCyp bind retroviral capsids and cause premature capsid disassembly, leading to blocks in reverse transcription. Capsid restriction by TRIM5 is one of the factors which restricts HIV-1 to the human species. Host PIN1 apparently facilitates the virion uncoating. On the other hand, interactions with PDZD8 or CYPA stabilize the capsid. Functionally, encapsulates and protects viral dimeric unspliced genomic RNA (gRNA). Binds these RNAs through its zinc fingers. Acts as a nucleic acid chaperone which is involved in rearangement of nucleic acid secondary structure during gRNA retrotranscription. Also facilitates template switch leading to recombination. As part of the polyprotein, participates in gRNA dimerization, packaging, tRNA incorporation and virion assembly. Its function is as follows. Aspartyl protease that mediates proteolytic cleavages of Gag and Gag-Pol polyproteins during or shortly after the release of the virion from the plasma membrane. Cleavages take place as an ordered, step-wise cascade to yield mature proteins. This process is called maturation. Displays maximal activity during the budding process just prior to particle release from the cell. Also cleaves Nef and Vif, probably concomitantly with viral structural proteins on maturation of virus particles. Hydrolyzes host EIF4GI and PABP1 in order to shut off the capped cellular mRNA translation. The resulting inhibition of cellular protein synthesis serves to ensure maximal viral gene expression and to evade host immune response. Also mediates cleavage of host YTHDF3. Mediates cleavage of host CARD8, thereby activating the CARD8 inflammasome, leading to the clearance of latent HIV-1 in patient CD4(+) T-cells after viral reactivation; in contrast, HIV-1 can evade CARD8-sensing when its protease remains inactive in infected cells prior to viral budding. In terms of biological role, multifunctional enzyme that converts the viral RNA genome into dsDNA in the cytoplasm, shortly after virus entry into the cell. This enzyme displays a DNA polymerase activity that can copy either DNA or RNA templates, and a ribonuclease H (RNase H) activity that cleaves the RNA strand of RNA-DNA heteroduplexes in a partially processive 3' to 5' endonucleasic mode. Conversion of viral genomic RNA into dsDNA requires many steps. A tRNA(3)-Lys binds to the primer-binding site (PBS) situated at the 5'-end of the viral RNA. RT uses the 3' end of the tRNA primer to perform a short round of RNA-dependent minus-strand DNA synthesis. The reading proceeds through the U5 region and ends after the repeated (R) region which is present at both ends of viral RNA. The portion of the RNA-DNA heteroduplex is digested by the RNase H, resulting in a ssDNA product attached to the tRNA primer. This ssDNA/tRNA hybridizes with the identical R region situated at the 3' end of viral RNA. This template exchange, known as minus-strand DNA strong stop transfer, can be either intra- or intermolecular. RT uses the 3' end of this newly synthesized short ssDNA to perform the RNA-dependent minus-strand DNA synthesis of the whole template. RNase H digests the RNA template except for two polypurine tracts (PPTs) situated at the 5'-end and near the center of the genome. It is not clear if both polymerase and RNase H activities are simultaneous. RNase H probably can proceed both in a polymerase-dependent (RNA cut into small fragments by the same RT performing DNA synthesis) and a polymerase-independent mode (cleavage of remaining RNA fragments by free RTs). Secondly, RT performs DNA-directed plus-strand DNA synthesis using the PPTs that have not been removed by RNase H as primers. PPTs and tRNA primers are then removed by RNase H. The 3' and 5' ssDNA PBS regions hybridize to form a circular dsDNA intermediate. Strand displacement synthesis by RT to the PBS and PPT ends produces a blunt ended, linear dsDNA copy of the viral genome that includes long terminal repeats (LTRs) at both ends. Catalyzes viral DNA integration into the host chromosome, by performing a series of DNA cutting and joining reactions. This enzyme activity takes place after virion entry into a cell and reverse transcription of the RNA genome in dsDNA. The first step in the integration process is 3' processing. This step requires a complex comprising the viral genome, matrix protein, Vpr and integrase. This complex is called the pre-integration complex (PIC). The integrase protein removes 2 nucleotides from each 3' end of the viral DNA, leaving recessed CA OH's at the 3' ends. In the second step, the PIC enters cell nucleus. This process is mediated through integrase and Vpr proteins, and allows the virus to infect a non dividing cell. This ability to enter the nucleus is specific of lentiviruses, other retroviruses cannot and rely on cell division to access cell chromosomes. In the third step, termed strand transfer, the integrase protein joins the previously processed 3' ends to the 5' ends of strands of target cellular DNA at the site of integration. The 5'-ends are produced by integrase-catalyzed staggered cuts, 5 bp apart. A Y-shaped, gapped, recombination intermediate results, with the 5'-ends of the viral DNA strands and the 3' ends of target DNA strands remaining unjoined, flanking a gap of 5 bp. The last step is viral DNA integration into host chromosome. This involves host DNA repair synthesis in which the 5 bp gaps between the unjoined strands are filled in and then ligated. Since this process occurs at both cuts flanking the HIV genome, a 5 bp duplication of host DNA is produced at the ends of HIV-1 integration. Alternatively, Integrase may catalyze the excision of viral DNA just after strand transfer, this is termed disintegration. This is Gag-Pol polyprotein (gag-pol) from Human immunodeficiency virus type 1 group M subtype F2 (isolate MP255) (HIV-1).